Consider the following 238-residue polypeptide: Cysteine-rich venom protein (238 aa).

An N-terminal signal peptide occupies residues 1-19 (MIAFIVLLSLAAVLQQSSG). Residues 20–27 (TVDFASES) constitute a propeptide that is removed on maturation. In terms of domain architecture, SCP spans 39–164 (KKHNALRRSV…PTKYLYVCQY (126 aa)). 8 disulfides stabilise this stretch: Cys75-Cys153, Cys92-Cys165, Cys148-Cys162, Cys184-Cys191, Cys187-Cys196, Cys200-Cys233, Cys209-Cys227, and Cys218-Cys231. The ShKT domain occupies 200 to 233 (CKREDDYSNCKSLAEKNKCMEEWMKSKCPASCFC).

It belongs to the CRISP family. Expressed by the venom gland.

The protein resides in the secreted. Blocks olfactory (CNGA2) and retinal (CNGA1) cyclic nucleotide-gated (CNG) ion channel currents. Does not inhibit retinal (CNGA3) currents. It forms high-affinity contacts with the pore turret region and most likely inhibits CNG channel current by blocking the external entrance to the transmembrane pore. Does not affect neither depolarization- nor caffeine-induced contraction arterial smooth muscle. The sequence is that of Cysteine-rich venom protein from Demansia vestigiata (Lesser black whip snake).